Here is a 91-residue protein sequence, read N- to C-terminus: Putative transmembrane protein ORF91a (91 aa).

The next 3 membrane-spanning stretches (helical) occupy residues 17 to 37 (TGIS…VGLA), 40 to 60 (AFLG…LLFM), and 69 to 89 (GIGF…YIST).

It is found in the host membrane. The chain is Putative transmembrane protein ORF91a from Acidianus convivator (ABV).